Here is a 492-residue protein sequence, read N- to C-terminus: N-succinylglutamate 5-semialdehyde dehydrogenase (492 aa).

220–225 (GSANTG) serves as a coordination point for NAD(+). Catalysis depends on residues Glu243 and Cys277.

It belongs to the aldehyde dehydrogenase family. AstD subfamily.

The enzyme catalyses N-succinyl-L-glutamate 5-semialdehyde + NAD(+) + H2O = N-succinyl-L-glutamate + NADH + 2 H(+). It participates in amino-acid degradation; L-arginine degradation via AST pathway; L-glutamate and succinate from L-arginine: step 4/5. Functionally, catalyzes the NAD-dependent reduction of succinylglutamate semialdehyde into succinylglutamate. The sequence is that of N-succinylglutamate 5-semialdehyde dehydrogenase from Escherichia coli (strain K12 / MC4100 / BW2952).